The following is a 155-amino-acid chain: MQRIEATLLAHDLKFALVSTRWNHLIVDRLVEGAELAFVQHGGKTENLDHFLVPGSYEVPLVARRLAETGRYDAVVCLGAVIKGDTDHYDFVAGGAANGILNTSLHTGVPVAFGVLTTDTVEQALNRAGIKAGNKGGEAVLAMIETANLLKQIER.

5-amino-6-(D-ribitylamino)uracil contacts are provided by residues tryptophan 22, serine 56 to glutamate 58, and alanine 80 to isoleucine 82. Position 85 to 86 (aspartate 85 to threonine 86) interacts with (2S)-2-hydroxy-3-oxobutyl phosphate. Residue histidine 88 is the Proton donor of the active site. Phenylalanine 113 contacts 5-amino-6-(D-ribitylamino)uracil. Arginine 127 contacts (2S)-2-hydroxy-3-oxobutyl phosphate.

The protein belongs to the DMRL synthase family.

It carries out the reaction (2S)-2-hydroxy-3-oxobutyl phosphate + 5-amino-6-(D-ribitylamino)uracil = 6,7-dimethyl-8-(1-D-ribityl)lumazine + phosphate + 2 H2O + H(+). It functions in the pathway cofactor biosynthesis; riboflavin biosynthesis; riboflavin from 2-hydroxy-3-oxobutyl phosphate and 5-amino-6-(D-ribitylamino)uracil: step 1/2. Its function is as follows. Catalyzes the formation of 6,7-dimethyl-8-ribityllumazine by condensation of 5-amino-6-(D-ribitylamino)uracil with 3,4-dihydroxy-2-butanone 4-phosphate. This is the penultimate step in the biosynthesis of riboflavin. The chain is 6,7-dimethyl-8-ribityllumazine synthase from Deinococcus radiodurans (strain ATCC 13939 / DSM 20539 / JCM 16871 / CCUG 27074 / LMG 4051 / NBRC 15346 / NCIMB 9279 / VKM B-1422 / R1).